The sequence spans 527 residues: Peptide chain release factor 3 (527 aa).

A tr-type G domain is found at 9–277 (AKRRTFAIIS…AVVDWAPLPL (269 aa)). Residues 18–25 (SHPDAGKT), 86–90 (DTPGH), and 140–143 (NKLD) each bind GTP.

Belongs to the TRAFAC class translation factor GTPase superfamily. Classic translation factor GTPase family. PrfC subfamily.

The protein localises to the cytoplasm. Increases the formation of ribosomal termination complexes and stimulates activities of RF-1 and RF-2. It binds guanine nucleotides and has strong preference for UGA stop codons. It may interact directly with the ribosome. The stimulation of RF-1 and RF-2 is significantly reduced by GTP and GDP, but not by GMP. The polypeptide is Peptide chain release factor 3 (Pseudomonas fluorescens (strain ATCC BAA-477 / NRRL B-23932 / Pf-5)).